A 357-amino-acid chain; its full sequence is NADH-quinone oxidoreductase subunit H (357 aa).

8 helical membrane-spanning segments follow: residues 20 to 40, 92 to 112, 127 to 147, 165 to 185, 206 to 226, 254 to 274, 294 to 314, and 329 to 349; these read WLVL…ILCV, ILFV…WAVV, LLYV…AGWA, VSYE…SGSL, FLSW…ISAV, MAFA…SCMA, IPGW…FVWF, and LGWK…AIWM.

Belongs to the complex I subunit 1 family. NDH-1 is composed of 14 different subunits. Subunits NuoA, H, J, K, L, M, N constitute the membrane sector of the complex.

It is found in the cell inner membrane. The catalysed reaction is a quinone + NADH + 5 H(+)(in) = a quinol + NAD(+) + 4 H(+)(out). Its function is as follows. NDH-1 shuttles electrons from NADH, via FMN and iron-sulfur (Fe-S) centers, to quinones in the respiratory chain. The immediate electron acceptor for the enzyme in this species is believed to be ubiquinone. Couples the redox reaction to proton translocation (for every two electrons transferred, four hydrogen ions are translocated across the cytoplasmic membrane), and thus conserves the redox energy in a proton gradient. This subunit may bind ubiquinone. The protein is NADH-quinone oxidoreductase subunit H of Bordetella petrii (strain ATCC BAA-461 / DSM 12804 / CCUG 43448).